We begin with the raw amino-acid sequence, 100 residues long: Small ribosomal subunit protein uS14c (100 aa).

The protein belongs to the universal ribosomal protein uS14 family. In terms of assembly, part of the 30S ribosomal subunit.

The protein resides in the plastid. The protein localises to the chloroplast. Functionally, binds 16S rRNA, required for the assembly of 30S particles. The chain is Small ribosomal subunit protein uS14c from Thalassiosira pseudonana (Marine diatom).